The primary structure comprises 754 residues: Nibrin (754 aa).

Positions 24–83 constitute an FHA domain; it reads YVVGRKNCAILIENDQSISRNHAVLTANFSVTNLSQTDEIPVLTLKDNSKYGTFVNEEKM. BRCT domains follow at residues 105 to 181 and 224 to 315; these read KFRI…TEFL and GKTF…LAVI. The interval 111–328 is mediates interaction with SP100; it reads EPLVACSSCL…TKNYCDPQGH (218 aa). Residues 221-402 are interaction with MTOR, MAPKAP1 and RICTOR; that stretch reads IFKGKTFIFL…FRMLSQDAPT (182 aa). Position 278 is a phosphoserine; by ATM (serine 278). Positions 326-346 are disordered; the sequence is QGHPSTGLKTTTPGPSLSQGV. Polar residues predominate over residues 328 to 346; that stretch reads HPSTGLKTTTPGPSLSQGV. Threonine 337 carries the post-translational modification Phosphothreonine. Position 343 is a phosphoserine; by ATM (serine 343). Serine 347 bears the Phosphoserine mark. Position 388 is an N6-lactoyllysine (lysine 388). Disordered stretches follow at residues 396-415 and 430-478; these read LSQD…NNNS and QLSP…MSSC. Serine 397 bears the Phosphoserine mark. Phosphothreonine is present on threonine 402. Composition is skewed to polar residues over residues 430–440 and 447–462; these read QLSPTKLPSIN and SQQQ…FQPS. Residue serine 432 is modified to Phosphoserine; by CDK2. A Glycyl lysine isopeptide (Lys-Gly) (interchain with G-Cter in ubiquitin) cross-link involves residue lysine 435. The Nuclear localization signal signature appears at 461 to 467; it reads PSTKKRE. Phosphoserine is present on residues serine 509 and serine 518. Residues lysine 529, lysine 571, and lysine 582 each participate in a glycyl lysine isopeptide (Lys-Gly) (interchain with G-Cter in SUMO2) cross-link. A phosphoserine mark is found at serine 615 and serine 673. Residues lysine 686, lysine 690, and lysine 735 each participate in a glycyl lysine isopeptide (Lys-Gly) (interchain with G-Cter in ubiquitin) cross-link. The short motif at 740-749 is the FxF/Y motif element; sequence ADDLFRYNPY.

It belongs to the Nibrin family. As to quaternary structure, component of the MRN complex composed of two heterodimers RAD50 and MRE11 associated with a single NBN. The MRN complexes dimerize on DNA to form joined MRN-MRN oligomers required for DNA double-strand break repair. As part of the MRN complex, interacts with MCM9; the interaction recruits the complex to DNA repair sites. Component of the BASC complex, at least composed of BRCA1, MSH2, MSH6, MLH1, ATM, BLM, RAD50, MRE11 and NBN. Interacts with histone H2AX; this requires phosphorylation of H2AX on 'Ser-139' and promotes NBN recruitment to DNA damage sites. Interacts with (phosphorylated) MDC1; promoting NBN recruitment to DNA damage sites. Interacts with (phosphorylated) RAD17; promoting NBN recruitment to DNA damage sites. Interacts (via FxF/Y motif) with ATM. Interacts with HJURP. Interacts with INTS3. Interacts with KPNA2. Interacts with TERF2; interaction is disrupted upon NBN phosphorylation by CDK2. Interacts with (phosphorylated) RBBP8/CtIP; the interaction links the role of the MRN complex in DNA double-strand break sensing to resection. Interacts with SP100; recruits NBN to PML bodies. Interacts with ATF2. Interacts with MTOR, MAPKAP1 isoform 2 and RICTOR; indicative for an association with the mTORC2 complex. Interacts with MRNIP. Interacts with UFL1; promoting UFL1 recruitment to double-strand breaks following DNA damage. Interacts with CYREN (via XLF motif). In terms of assembly, (Microbial infection) Interacts with herpes simplex virus 1 protein UL12. Phosphorylated by ATM in response of ionizing radiation, and such phosphorylation is responsible intra-S phase checkpoint control and telomere maintenance. Phosphorylated at Ser-432 by CDK2 in S/G2 phases abolishes interaction with TERF2, enabling DCLRE1B/Apollo recruitment to telomeres. Phosphorylation at Ser-432 in response to dysfunctional telomeres promotes non-homologous end joining repair at telomeres, while dephosphorylation by PPP1CA promotes microhomology-mediated end-joining (MMEJ) repair. In terms of processing, ubiquitinated at Lys-435 via 'Lys-6'-linked ubiquitin chains by RNF8, promoting NBN recruitment to DNA double-strand breaks (DSBs). Ubiquitinated at Lys-686 and Lys-689 via 'Lys-63'-linked ubiquitin chains by PELI1: ubiquitination takes place following PELI1 phosphorylation and promotes ATM activation and DNA repair. Ubiquitinated at Lys-735 via 'Lys-63'-linked ubiquitin chains by the SCF(SKP2) complex: ubiquitination takes place following SKP2 phosphorylation and promotes ATM activation and DNA repair. Post-translationally, lactylation at Lys-388 by KAT5 in response to DNA damage promotes recruitment of the MRN complex to DNA damage sites. Delactylated by HDAC3. Ubiquitous. Expressed at high levels in testis.

It localises to the nucleus. The protein localises to the chromosome. It is found in the PML body. Its subcellular location is the telomere. Component of the MRN complex, which plays a central role in double-strand break (DSB) repair, DNA recombination, maintenance of telomere integrity and meiosis. The MRN complex is involved in the repair of DNA double-strand breaks (DSBs) via homologous recombination (HR), an error-free mechanism which primarily occurs during S and G2 phases. The complex (1) mediates the end resection of damaged DNA, which generates proper single-stranded DNA, a key initial steps in HR, and is (2) required for the recruitment of other repair factors and efficient activation of ATM and ATR upon DNA damage. The MRN complex possesses single-strand endonuclease activity and double-strand-specific 3'-5' exonuclease activity, which are provided by MRE11, to initiate end resection, which is required for single-strand invasion and recombination. Within the MRN complex, NBN acts as a protein-protein adapter, which specifically recognizes and binds phosphorylated proteins, promoting their recruitment to DNA damage sites. Recruits MRE11 and RAD50 components of the MRN complex to DSBs in response to DNA damage. Promotes the recruitment of PI3/PI4-kinase family members ATM, ATR, and probably DNA-PKcs to the DNA damage sites, activating their functions. Mediates the recruitment of phosphorylated RBBP8/CtIP to DSBs, leading to cooperation between the MRN complex and RBBP8/CtIP to initiate end resection. RBBP8/CtIP specifically promotes the endonuclease activity of the MRN complex to clear DNA ends containing protein adducts. The MRN complex is also required for the processing of R-loops. NBN also functions in telomere length maintenance via its interaction with TERF2: interaction with TERF2 during G1 phase preventing recruitment of DCLRE1B/Apollo to telomeres. NBN also promotes DNA repair choice at dysfunctional telomeres: NBN phosphorylation by CDK2 promotes non-homologous end joining repair at telomeres, while unphosphorylated NBN promotes microhomology-mediated end-joining (MMEJ) repair. Enhances AKT1 phosphorylation possibly by association with the mTORC2 complex. The polypeptide is Nibrin (Homo sapiens (Human)).